The primary structure comprises 198 residues: Imidazoleglycerol-phosphate dehydratase (198 aa).

The protein belongs to the imidazoleglycerol-phosphate dehydratase family.

The protein resides in the cytoplasm. It carries out the reaction D-erythro-1-(imidazol-4-yl)glycerol 3-phosphate = 3-(imidazol-4-yl)-2-oxopropyl phosphate + H2O. It functions in the pathway amino-acid biosynthesis; L-histidine biosynthesis; L-histidine from 5-phospho-alpha-D-ribose 1-diphosphate: step 6/9. This is Imidazoleglycerol-phosphate dehydratase from Herminiimonas arsenicoxydans.